Consider the following 270-residue polypeptide: Thiamine thiazole synthase (270 aa).

NAD(+)-binding positions include alanine 39, 58 to 59, glycine 66, and leucine 130; that span reads EQ. A 2,3-didehydroalanine (Cys) modification is found at cysteine 159. An NAD(+)-binding site is contributed by aspartate 161. Residues aspartate 161 and histidine 176 each contribute to the Fe cation site. NAD(+) is bound at residue isoleucine 223. Arginine 233 lines the glycine pocket.

It belongs to the THI4 family. As to quaternary structure, homooctamer; tetramer of dimers. Fe(2+) serves as cofactor. In terms of processing, during the catalytic reaction, a sulfide is transferred from Cys-159 to a reaction intermediate, generating a dehydroalanine residue.

It catalyses the reaction [ADP-thiazole synthase]-L-cysteine + glycine + NAD(+) = [ADP-thiazole synthase]-dehydroalanine + ADP-5-ethyl-4-methylthiazole-2-carboxylate + nicotinamide + 3 H2O + 2 H(+). Its pathway is cofactor biosynthesis; thiamine diphosphate biosynthesis. Involved in biosynthesis of the thiamine precursor thiazole. Catalyzes the conversion of NAD and glycine to adenosine diphosphate 5-(2-hydroxyethyl)-4-methylthiazole-2-carboxylic acid (ADT), an adenylated thiazole intermediate. The reaction includes an iron-dependent sulfide transfer from a conserved cysteine residue of the protein to a thiazole intermediate. The enzyme can only undergo a single turnover, which suggests it is a suicide enzyme. The protein is Thiamine thiazole synthase of Aeropyrum pernix (strain ATCC 700893 / DSM 11879 / JCM 9820 / NBRC 100138 / K1).